Here is a 269-residue protein sequence, read N- to C-terminus: MISYPNIDPIAVSIGPISVHWYGIMYLIGFAGAYLCGMYRAKRSNGLWTPEMVSDAIFYGALGVILGGRVGYILFYQFPAFVDNPLILVRIWEGGMSFHGGLLGVIIAMFFFARRYNKHLVDVTDFLAPFVPIGLGAGRLGNFIGGELWGKPTDVSWAMIFPNDPLQLARHPSQLYQFALEGVALFCILWFFSQRTKPRYCVSGMFLLFYGIFRILVEFVREPDIQIGYIAFGWLTEGQLLSLPMVIIGAGLIMAGLKLNTFPKASTSK.

7 helical membrane passes run 10–30 (IAVS…LIGF), 56–76 (AIFY…ILFY), 91–111 (IWEG…AMFF), 126–146 (FLAP…FIGG), 172–192 (PSQL…LWFF), 200–220 (YCVS…VEFV), and 237–257 (EGQL…MAGL). R139 lines the a 1,2-diacyl-sn-glycero-3-phospho-(1'-sn-glycerol) pocket.

This sequence belongs to the Lgt family.

The protein localises to the cell inner membrane. It catalyses the reaction L-cysteinyl-[prolipoprotein] + a 1,2-diacyl-sn-glycero-3-phospho-(1'-sn-glycerol) = an S-1,2-diacyl-sn-glyceryl-L-cysteinyl-[prolipoprotein] + sn-glycerol 1-phosphate + H(+). The protein operates within protein modification; lipoprotein biosynthesis (diacylglyceryl transfer). In terms of biological role, catalyzes the transfer of the diacylglyceryl group from phosphatidylglycerol to the sulfhydryl group of the N-terminal cysteine of a prolipoprotein, the first step in the formation of mature lipoproteins. This chain is Phosphatidylglycerol--prolipoprotein diacylglyceryl transferase, found in Marinomonas sp. (strain MWYL1).